A 253-amino-acid polypeptide reads, in one-letter code: MLTRRIIACLDVTNGRVVKGVQFLDLMDAGDPAELAARHAASGADEIVLLDITATHEGRGTLLETVRKTAQRLFIPFTVGGGIRTADDAAAVFDAGADKISINSAALTRPELIEEIGSKFGAQAVVVAIDARRNATGAEVFASGGRKPTGRDAVAWAREAEQRGAGEILLTSMDADGTRDGFDCELTAAVSSAVQIPVIASGGAGTPQHFADVFLRGKADAALAASIFHFGVADARSLKAELAAQSIPMRLPC.

Residues D11 and D130 contribute to the active site.

This sequence belongs to the HisA/HisF family. As to quaternary structure, heterodimer of HisH and HisF.

The protein localises to the cytoplasm. The enzyme catalyses 5-[(5-phospho-1-deoxy-D-ribulos-1-ylimino)methylamino]-1-(5-phospho-beta-D-ribosyl)imidazole-4-carboxamide + L-glutamine = D-erythro-1-(imidazol-4-yl)glycerol 3-phosphate + 5-amino-1-(5-phospho-beta-D-ribosyl)imidazole-4-carboxamide + L-glutamate + H(+). It functions in the pathway amino-acid biosynthesis; L-histidine biosynthesis; L-histidine from 5-phospho-alpha-D-ribose 1-diphosphate: step 5/9. Its function is as follows. IGPS catalyzes the conversion of PRFAR and glutamine to IGP, AICAR and glutamate. The HisF subunit catalyzes the cyclization activity that produces IGP and AICAR from PRFAR using the ammonia provided by the HisH subunit. The protein is Imidazole glycerol phosphate synthase subunit HisF of Acidobacterium capsulatum (strain ATCC 51196 / DSM 11244 / BCRC 80197 / JCM 7670 / NBRC 15755 / NCIMB 13165 / 161).